We begin with the raw amino-acid sequence, 171 residues long: 3-hydroxydecanoyl-[acyl-carrier-protein] dehydratase (171 aa).

Residue His70 is part of the active site.

Belongs to the thioester dehydratase family. FabA subfamily. Homodimer.

It is found in the cytoplasm. It carries out the reaction a (3R)-hydroxyacyl-[ACP] = a (2E)-enoyl-[ACP] + H2O. The enzyme catalyses (3R)-hydroxydecanoyl-[ACP] = (2E)-decenoyl-[ACP] + H2O. The catalysed reaction is (2E)-decenoyl-[ACP] = (3Z)-decenoyl-[ACP]. The protein operates within lipid metabolism; fatty acid biosynthesis. In terms of biological role, necessary for the introduction of cis unsaturation into fatty acids. Catalyzes the dehydration of (3R)-3-hydroxydecanoyl-ACP to E-(2)-decenoyl-ACP and then its isomerization to Z-(3)-decenoyl-ACP. Can catalyze the dehydratase reaction for beta-hydroxyacyl-ACPs with saturated chain lengths up to 16:0, being most active on intermediate chain length. The protein is 3-hydroxydecanoyl-[acyl-carrier-protein] dehydratase of Mesorhizobium japonicum (strain LMG 29417 / CECT 9101 / MAFF 303099) (Mesorhizobium loti (strain MAFF 303099)).